Here is a 305-residue protein sequence, read N- to C-terminus: MSRLAVELPGLSMKNPIMPASGCFGFGKEFAGFYDLNHLGAIAIKATTVEPRFGNPTPRVAETHSGMLNAIGLQNPGLNNVIDNELARLADVDVPIVANIAGSTVNDYVEVAEAISRVDNVHALELNISCPNVKEGGIAFGTVPDVAAQLTQEVKRVSTVPVYVKLSPNVSDIVEMAQAVERAGADGLSMINTLLGMRLDLKRRTPILANGTGGLSGPAIKPVAIRMIYQVSQAVSIPIIGMGGIQSADDVLEFMLAGADAVAVGTANFTDPYVCPTIIDELPKRMDELGIERIADIVGGSWKQS.

FMN is bound by residues serine 21 and 45-46 (KA). Substrate-binding positions include lysine 45 and 69–73 (NAIGL). FMN is bound by residues asparagine 99 and asparagine 127. Asparagine 127 serves as a coordination point for substrate. Cysteine 130 (nucleophile) is an active-site residue. Lysine 165 and isoleucine 191 together coordinate FMN. 192–193 (NT) lines the substrate pocket. FMN contacts are provided by residues glycine 217, 243–244 (GG), and 265–266 (GT).

Belongs to the dihydroorotate dehydrogenase family. Type 1 subfamily. In terms of assembly, heterotetramer of 2 PyrK and 2 PyrD type B subunits. FMN serves as cofactor.

Its subcellular location is the cytoplasm. The enzyme catalyses (S)-dihydroorotate + NAD(+) = orotate + NADH + H(+). The protein operates within pyrimidine metabolism; UMP biosynthesis via de novo pathway; orotate from (S)-dihydroorotate (NAD(+) route): step 1/1. Catalyzes the conversion of dihydroorotate to orotate with NAD(+) as electron acceptor. The chain is Dihydroorotate dehydrogenase B (NAD(+)), catalytic subunit (pyrD) from Halalkalibacterium halodurans (strain ATCC BAA-125 / DSM 18197 / FERM 7344 / JCM 9153 / C-125) (Bacillus halodurans).